Reading from the N-terminus, the 529-residue chain is uncharacterized protein (529 aa).

An N-terminal signal peptide occupies residues 1–20; sequence MYFLILILVLLLIMVAAATA.

This is an uncharacterized protein from Orgyia pseudotsugata multicapsid polyhedrosis virus (OpMNPV).